The sequence spans 61 residues: U-stichotoxin-Hcr1a (61 aa).

An N-terminal signal peptide occupies residues 1–21 (MKPAIFLMLFVAMFLISEGEG). The propeptide occupies 22–31 (FKPKDAPQER). The residue at position 36 (Pro36) is a Hydroxyproline. 2 disulfides stabilise this stretch: Cys41–Cys53 and Cys44–Cys59.

It belongs to the Hau1a/HC18/HC19 family.

The protein localises to the secreted. It is found in the nematocyst. Its function is as follows. Toxin that is lethal to crab. Does not produce the typical symptoms associated with sodium channel toxins in crabs, suggesting that it likely does not act on sodium channels. In Radianthus crispa (Leathery sea anemone), this protein is U-stichotoxin-Hcr1a.